A 237-amino-acid polypeptide reads, in one-letter code: Putative glutathione-dependent formaldehyde-activating enzyme (237 aa).

A CENP-V/GFA domain is found at 38 to 152; the sequence is ITLICHCPPS…LGQSGGSEGE (115 aa). Cys-42, Cys-44, Cys-67, Cys-69, Cys-72, Cys-114, and Cys-117 together coordinate Zn(2+).

It belongs to the Gfa family. It depends on Zn(2+) as a cofactor.

The catalysed reaction is S-(hydroxymethyl)glutathione = glutathione + formaldehyde. Its pathway is one-carbon metabolism; formaldehyde degradation; formate from formaldehyde (glutathione route): step 1/3. Catalyzes the condensation of formaldehyde and glutathione to S-hydroxymethylglutathione. In Sordaria macrospora (strain ATCC MYA-333 / DSM 997 / K(L3346) / K-hell), this protein is Putative glutathione-dependent formaldehyde-activating enzyme.